The primary structure comprises 237 residues: Uridylate kinase (237 aa).

11-14 (KLSG) contributes to the ATP binding site. Gly53 is a UMP binding site. Residues Gly54 and Arg58 each coordinate ATP. UMP contacts are provided by residues Asp73 and 134–141 (TGNPFFTT). The ATP site is built by Thr161, Tyr167, and Asp170.

Belongs to the UMP kinase family. In terms of assembly, homohexamer.

It localises to the cytoplasm. The catalysed reaction is UMP + ATP = UDP + ADP. Its pathway is pyrimidine metabolism; CTP biosynthesis via de novo pathway; UDP from UMP (UMPK route): step 1/1. With respect to regulation, inhibited by UTP. Its function is as follows. Catalyzes the reversible phosphorylation of UMP to UDP. The protein is Uridylate kinase of Nitrosomonas europaea (strain ATCC 19718 / CIP 103999 / KCTC 2705 / NBRC 14298).